A 596-amino-acid chain; its full sequence is Chloride intracellular channel protein 6 (596 aa).

Residues methionine 1 to glutamate 360 are disordered. Basic and acidic residues predominate over residues leucine 34–arginine 48. Serine 40 carries the phosphoserine modification. A compositionally biased stretch (gly residues) spans glycine 65–glycine 74. A compositionally biased stretch (low complexity) spans glycine 83 to alanine 98. The span at serine 118–aspartate 130 shows a compositional bias: polar residues. Residues aspartate 148–serine 160 show a composition bias toward acidic residues. 2 stretches are compositionally biased toward low complexity: residues glycine 197 to glutamine 213 and glycine 225 to glycine 244. The segment covering threonine 246 to glycine 290 has biased composition (basic and acidic residues). Serine 304 bears the Phosphoserine mark. The segment covering glutamate 338–asparagine 348 has biased composition (basic and acidic residues). The G-site motif lies at cysteine 379–serine 382. The chain crosses the membrane as a helical span at residues phenylalanine 381–valine 401. The GST C-terminal domain maps to aspartate 425–lysine 596.

The protein belongs to the chloride channel CLIC family. Monomer (soluble state). Interacts with dopamine receptors DRD2, DRD3 and DRD4. Post-translationally, phosphorylated.

The protein resides in the cytoplasm. The protein localises to the cell membrane. It carries out the reaction chloride(in) = chloride(out). With respect to regulation, channel activity is redox- and pH-regulated. Inhibited by IAA-94. Functionally, in the soluble state, catalyzes glutaredoxin-like thiol disulfide exchange reactions with reduced glutathione as electron donor. Can insert into membranes and form voltage-dependent chloride-selective channels. The channel opens upon membrane depolarization at positive voltages and closes at negative membrane voltages. May play a critical role in water-secreting cells, possibly through the regulation of chloride ion transport. The polypeptide is Chloride intracellular channel protein 6 (Clic6) (Mus musculus (Mouse)).